A 442-amino-acid polypeptide reads, in one-letter code: tRNA-2-methylthio-N(6)-dimethylallyladenosine synthase (442 aa).

The 119-residue stretch at 2 to 120 folds into the MTTase N-terminal domain; sequence KKVFIRTFGC…LPKMIVDKET (119 aa). [4Fe-4S] cluster is bound by residues cysteine 11, cysteine 49, cysteine 83, cysteine 157, cysteine 161, and cysteine 164. A Radical SAM core domain is found at 143-375; it reads RVEGGAAFVS…NEVIEAETAR (233 aa). The 64-residue stretch at 378-441 folds into the TRAM domain; sequence QTMIGTVQRC…TFSLRGKIVE (64 aa).

This sequence belongs to the methylthiotransferase family. MiaB subfamily. As to quaternary structure, monomer. [4Fe-4S] cluster serves as cofactor.

It localises to the cytoplasm. It carries out the reaction N(6)-dimethylallyladenosine(37) in tRNA + (sulfur carrier)-SH + AH2 + 2 S-adenosyl-L-methionine = 2-methylsulfanyl-N(6)-dimethylallyladenosine(37) in tRNA + (sulfur carrier)-H + 5'-deoxyadenosine + L-methionine + A + S-adenosyl-L-homocysteine + 2 H(+). Catalyzes the methylthiolation of N6-(dimethylallyl)adenosine (i(6)A), leading to the formation of 2-methylthio-N6-(dimethylallyl)adenosine (ms(2)i(6)A) at position 37 in tRNAs that read codons beginning with uridine. The chain is tRNA-2-methylthio-N(6)-dimethylallyladenosine synthase from Neisseria gonorrhoeae (strain ATCC 700825 / FA 1090).